The following is a 523-amino-acid chain: Effector protein hopAB1 (523 aa).

Disordered regions lie at residues 1 to 94, 165 to 223, and 299 to 320; these read MPGI…EAQQ, VRQQ…QGLD, and RQTT…SGRR. Residues 18–31 show a composition bias toward basic and acidic residues; that stretch reads TDGEPVTEREHDSS. A compositionally biased stretch (low complexity) spans 181–194; sequence SSSGSSQRSLIGRS.

It belongs to the HopAB family.

Its subcellular location is the secreted. Functionally, effector protein that plays different roles depending on the species and plant cultivars that interact with the pathogen. Acts as a virulence determinant by enhancing the development of disease symptoms and bacterial growth. Acts as an avirulence factor by eliciting hypersensitive response (HR) and plant resistance. This chain is Effector protein hopAB1 (hopAB1), found in Pseudomonas savastanoi pv. glycinea (Pseudomonas syringae pv. glycinea).